The chain runs to 206 residues: Ribosomal RNA small subunit methyltransferase G (206 aa).

Residues glycine 73, leucine 78, 124–125, and arginine 139 each bind S-adenosyl-L-methionine; that span reads VE.

The protein belongs to the methyltransferase superfamily. RNA methyltransferase RsmG family.

It is found in the cytoplasm. The catalysed reaction is guanosine(527) in 16S rRNA + S-adenosyl-L-methionine = N(7)-methylguanosine(527) in 16S rRNA + S-adenosyl-L-homocysteine. Specifically methylates the N7 position of guanine in position 527 of 16S rRNA. The sequence is that of Ribosomal RNA small subunit methyltransferase G from Photorhabdus laumondii subsp. laumondii (strain DSM 15139 / CIP 105565 / TT01) (Photorhabdus luminescens subsp. laumondii).